A 551-amino-acid polypeptide reads, in one-letter code: Calcium-dependent protein kinase 3 (551 aa).

The tract at residues 1-57 (MGNCCRSPAAAAREDVKSSHFPASAGKKKPHQARNGGVGGGGGGGGGGGGGGGAGQK) is disordered. Residue glycine 2 is the site of N-myristoyl glycine attachment. The segment covering 36–55 (GGVGGGGGGGGGGGGGGGAG) has biased composition (gly residues). In terms of domain architecture, Protein kinase spans 77 to 335 (YALDRELGRG…AKQVLEHPWL (259 aa)). ATP-binding positions include 83-91 (LGRGEFGVT) and lysine 106. The Proton acceptor role is filled by aspartate 201. Residues 341–371 (APNVPLGDIVKSRLKQFSRMNRFKRRALRVI) are autoinhibitory domain. EF-hand domains are found at residues 378-413 (EEVEDIKEMFKAMDTDNDGIVSYEELKSGIAKFGSH), 414-449 (LAESEVQMLIEAVDTNGKDALDYGEFLAVSLHLQRM), 450-485 (ANDEHLRRAFLFFDKDGNGYIEPEELREALVDDGAG), and 486-521 (DSMEVVNDILQEVDTDKDGKISYDEFVAMMKTGTDW). Ca(2+)-binding residues include aspartate 391, aspartate 393, aspartate 395, glutamate 402, aspartate 427, asparagine 429, glutamate 438, aspartate 463, aspartate 465, asparagine 467, tyrosine 469, glutamate 474, aspartate 499, aspartate 501, aspartate 503, lysine 505, and glutamate 510.

Belongs to the protein kinase superfamily. Ser/Thr protein kinase family. CDPK subfamily. As to expression, expressed in roots and developing seeds.

It is found in the membrane. It carries out the reaction L-seryl-[protein] + ATP = O-phospho-L-seryl-[protein] + ADP + H(+). The enzyme catalyses L-threonyl-[protein] + ATP = O-phospho-L-threonyl-[protein] + ADP + H(+). With respect to regulation, activated by calcium. Autophosphorylation may play an important role in the regulation of the kinase activity. In terms of biological role, may play a role in signal transduction pathways that involve calcium as a second messenger. The chain is Calcium-dependent protein kinase 3 from Oryza sativa subsp. japonica (Rice).